The sequence spans 344 residues: Protein Tob2 (344 aa).

Disordered regions lie at residues 144–169 (GSQD…FIPR) and 191–225 (MKKG…SPTN). Over residues 145–164 (SQDSSLSNSPSPSFGQSPSP) the composition is skewed to low complexity. Over residues 194–210 (GGGAASGGGVASSGAGG) the composition is skewed to gly residues. A compositionally biased stretch (low complexity) spans 211-225 (QQPPQQPRMARSPTN). Position 254 is a phosphoserine (Ser-254).

This sequence belongs to the BTG family. As to quaternary structure, associates with CAF1. In terms of tissue distribution, ubiquitous.

The protein localises to the cytoplasm. Functionally, anti-proliferative protein inhibits cell cycle progression from the G0/G1 to S phases. The sequence is that of Protein Tob2 (TOB2) from Homo sapiens (Human).